Here is a 392-residue protein sequence, read N- to C-terminus: Formate-dependent phosphoribosylglycinamide formyltransferase (392 aa).

Residues 22–23 (EL) and Glu82 contribute to the N(1)-(5-phospho-beta-D-ribosyl)glycinamide site. Residues Arg114, Lys155, 160–165 (SSGKGQ), 195–198 (EGVV), and Glu203 contribute to the ATP site. In terms of domain architecture, ATP-grasp spans 119 to 308 (RLAAEELGLP…EFALHVRAFL (190 aa)). Glu267 and Glu279 together coordinate Mg(2+). Residues Asp286, Lys355, and 362 to 363 (RR) each bind N(1)-(5-phospho-beta-D-ribosyl)glycinamide.

This sequence belongs to the PurK/PurT family. As to quaternary structure, homodimer.

It catalyses the reaction N(1)-(5-phospho-beta-D-ribosyl)glycinamide + formate + ATP = N(2)-formyl-N(1)-(5-phospho-beta-D-ribosyl)glycinamide + ADP + phosphate + H(+). Its pathway is purine metabolism; IMP biosynthesis via de novo pathway; N(2)-formyl-N(1)-(5-phospho-D-ribosyl)glycinamide from N(1)-(5-phospho-D-ribosyl)glycinamide (formate route): step 1/1. Involved in the de novo purine biosynthesis. Catalyzes the transfer of formate to 5-phospho-ribosyl-glycinamide (GAR), producing 5-phospho-ribosyl-N-formylglycinamide (FGAR). Formate is provided by PurU via hydrolysis of 10-formyl-tetrahydrofolate. In Salmonella typhimurium (strain LT2 / SGSC1412 / ATCC 700720), this protein is Formate-dependent phosphoribosylglycinamide formyltransferase.